A 358-amino-acid chain; its full sequence is 3-dehydroquinate synthase (358 aa).

NAD(+) is bound by residues 69 to 74, 103 to 107, 127 to 128, Lys140, Lys149, and 167 to 170; these read DGEAHK, GVIGD, TT, and CLRT. Positions 182, 245, and 262 each coordinate Zn(2+).

The protein belongs to the sugar phosphate cyclases superfamily. Dehydroquinate synthase family. Co(2+) is required as a cofactor. Zn(2+) serves as cofactor. Requires NAD(+) as cofactor.

The protein localises to the cytoplasm. The catalysed reaction is 7-phospho-2-dehydro-3-deoxy-D-arabino-heptonate = 3-dehydroquinate + phosphate. It participates in metabolic intermediate biosynthesis; chorismate biosynthesis; chorismate from D-erythrose 4-phosphate and phosphoenolpyruvate: step 2/7. Catalyzes the conversion of 3-deoxy-D-arabino-heptulosonate 7-phosphate (DAHP) to dehydroquinate (DHQ). This is 3-dehydroquinate synthase from Tolumonas auensis (strain DSM 9187 / NBRC 110442 / TA 4).